A 65-amino-acid chain; its full sequence is Large ribosomal subunit protein bL35 (65 aa).

Residues 1-11 (MPKIKTRRSAA) show a composition bias toward basic residues. Disordered stretches follow at residues 1–24 (MPKI…KFKR) and 41–65 (RMRL…MPYA).

This sequence belongs to the bacterial ribosomal protein bL35 family.

The polypeptide is Large ribosomal subunit protein bL35 (Nitratidesulfovibrio vulgaris (strain DSM 19637 / Miyazaki F) (Desulfovibrio vulgaris)).